Here is a 498-residue protein sequence, read N- to C-terminus: Glycerol kinase (498 aa).

Threonine 12 lines the ADP pocket. ATP is bound by residues threonine 12, threonine 13, and serine 14. Threonine 12 contacts sn-glycerol 3-phosphate. Arginine 16 contacts ADP. The sn-glycerol 3-phosphate site is built by arginine 82, glutamate 83, and tyrosine 134. Residues arginine 82, glutamate 83, and tyrosine 134 each coordinate glycerol. Residue histidine 230 is modified to Phosphohistidine; by HPr. Aspartate 244 serves as a coordination point for sn-glycerol 3-phosphate. Glycerol-binding residues include aspartate 244 and glutamine 245. Threonine 266 and glycine 309 together coordinate ADP. Positions 266, 309, 313, and 410 each coordinate ATP. Positions 410 and 414 each coordinate ADP.

Belongs to the FGGY kinase family. Homotetramer and homodimer (in equilibrium). Post-translationally, the phosphoenolpyruvate-dependent sugar phosphotransferase system (PTS), including enzyme I, and histidine-containing protein (HPr) are required for the phosphorylation, which leads to the activation of the enzyme.

It catalyses the reaction glycerol + ATP = sn-glycerol 3-phosphate + ADP + H(+). It participates in polyol metabolism; glycerol degradation via glycerol kinase pathway; sn-glycerol 3-phosphate from glycerol: step 1/1. With respect to regulation, activated by phosphorylation and inhibited by fructose 1,6-bisphosphate (FBP). Key enzyme in the regulation of glycerol uptake and metabolism. Catalyzes the phosphorylation of glycerol to yield sn-glycerol 3-phosphate. This is Glycerol kinase from Staphylococcus aureus (strain bovine RF122 / ET3-1).